Here is a 545-residue protein sequence, read N- to C-terminus: MAELTINADDVRIALNEFAASYEPGNAERVEVGRVTTAGDGIARVEGLPSVMANELLRFEDGTLGLAQNLDVREIGVIVLGDFTGIEEGQEVHRTGQVLSVPVGDAFLGRVVDPLGQPIDDLGEIKAETTRALELQAPGVTQRKSVHEPMQTGLKAIDAMIPIGRGQRQLIIGDRQTGKSAIAIDTIINQKANWASGDVTKQVRCIYVAIGQKASTIAAVRQTLEDNGALEYTTIVASPASDPAGFKYLAPYAGSAIGQHWMYGGKHVLIVFDDLSKQAEAYRAVSLLLRRPPGREAYPGDVFYLHSRLLERCAKLSDELGAGSMTGLPLIETKANDVSAYIPTNVISITDGQIFLQSDLFNANQRPAVDVGVSVSRVGGAAQVKSMKKVSGTLKLELAQYRDMQAFAMFASDLDAASRQQLTRGARLMELLKQGQYSPFPVENQVVSIWAGTNGYLDDVPVEDISRFETEFLEHLKHKSSILTTLAQTNVMDDDTAEALKTSIVAFKKGFFGEGDNLLVGAGHEEYAPIDEAQVDQEKIVKQKR.

Residue 173-180 (GDRQTGKS) coordinates ATP.

Belongs to the ATPase alpha/beta chains family. F-type ATPases have 2 components, CF(1) - the catalytic core - and CF(0) - the membrane proton channel. CF(1) has five subunits: alpha(3), beta(3), gamma(1), delta(1), epsilon(1). CF(0) has three main subunits: a(1), b(2) and c(9-12). The alpha and beta chains form an alternating ring which encloses part of the gamma chain. CF(1) is attached to CF(0) by a central stalk formed by the gamma and epsilon chains, while a peripheral stalk is formed by the delta and b chains.

The protein localises to the cell membrane. It carries out the reaction ATP + H2O + 4 H(+)(in) = ADP + phosphate + 5 H(+)(out). In terms of biological role, produces ATP from ADP in the presence of a proton gradient across the membrane. The alpha chain is a regulatory subunit. This chain is ATP synthase subunit alpha, found in Arthrobacter sp. (strain FB24).